The following is a 264-amino-acid chain: Indole-3-glycerol phosphate synthase (264 aa).

The protein belongs to the TrpC family.

The enzyme catalyses 1-(2-carboxyphenylamino)-1-deoxy-D-ribulose 5-phosphate + H(+) = (1S,2R)-1-C-(indol-3-yl)glycerol 3-phosphate + CO2 + H2O. It functions in the pathway amino-acid biosynthesis; L-tryptophan biosynthesis; L-tryptophan from chorismate: step 4/5. This Albidiferax ferrireducens (strain ATCC BAA-621 / DSM 15236 / T118) (Rhodoferax ferrireducens) protein is Indole-3-glycerol phosphate synthase.